We begin with the raw amino-acid sequence, 146 residues long: Large ribosomal subunit protein uL15 (146 aa).

A disordered region spans residues 1-55; that stretch reads MGLRLNELSPGVGAKKTAQRRGRGIGSGLGKTGGRGVKGQKSRSGSSIRSGFEGG. Positions 24–37 are enriched in gly residues; the sequence is GIGSGLGKTGGRGV.

Belongs to the universal ribosomal protein uL15 family. Part of the 50S ribosomal subunit.

Binds to the 23S rRNA. The protein is Large ribosomal subunit protein uL15 of Psychrobacter cryohalolentis (strain ATCC BAA-1226 / DSM 17306 / VKM B-2378 / K5).